The following is a 307-amino-acid chain: Methionyl-tRNA formyltransferase (307 aa).

(6S)-5,6,7,8-tetrahydrofolate is bound at residue 109–112 (SLLP).

The protein belongs to the Fmt family.

It catalyses the reaction L-methionyl-tRNA(fMet) + (6R)-10-formyltetrahydrofolate = N-formyl-L-methionyl-tRNA(fMet) + (6S)-5,6,7,8-tetrahydrofolate + H(+). Functionally, attaches a formyl group to the free amino group of methionyl-tRNA(fMet). The formyl group appears to play a dual role in the initiator identity of N-formylmethionyl-tRNA by promoting its recognition by IF2 and preventing the misappropriation of this tRNA by the elongation apparatus. The protein is Methionyl-tRNA formyltransferase of Mycobacteroides abscessus (strain ATCC 19977 / DSM 44196 / CCUG 20993 / CIP 104536 / JCM 13569 / NCTC 13031 / TMC 1543 / L948) (Mycobacterium abscessus).